The following is a 576-amino-acid chain: DNA mismatch repair protein MutL (576 aa).

Belongs to the DNA mismatch repair MutL/HexB family.

Its function is as follows. This protein is involved in the repair of mismatches in DNA. It is required for dam-dependent methyl-directed DNA mismatch repair. May act as a 'molecular matchmaker', a protein that promotes the formation of a stable complex between two or more DNA-binding proteins in an ATP-dependent manner without itself being part of a final effector complex. The polypeptide is DNA mismatch repair protein MutL (Chlamydia trachomatis serovar L2 (strain ATCC VR-902B / DSM 19102 / 434/Bu)).